The sequence spans 302 residues: Bifunctional protein FolD (302 aa).

NADP(+)-binding positions include 168–170 (GRS), Thr197, and Val238.

Belongs to the tetrahydrofolate dehydrogenase/cyclohydrolase family. In terms of assembly, homodimer.

The enzyme catalyses (6R)-5,10-methylene-5,6,7,8-tetrahydrofolate + NADP(+) = (6R)-5,10-methenyltetrahydrofolate + NADPH. It carries out the reaction (6R)-5,10-methenyltetrahydrofolate + H2O = (6R)-10-formyltetrahydrofolate + H(+). It functions in the pathway one-carbon metabolism; tetrahydrofolate interconversion. Catalyzes the oxidation of 5,10-methylenetetrahydrofolate to 5,10-methenyltetrahydrofolate and then the hydrolysis of 5,10-methenyltetrahydrofolate to 10-formyltetrahydrofolate. This Desulfatibacillum aliphaticivorans protein is Bifunctional protein FolD.